Reading from the N-terminus, the 308-residue chain is Elongation factor Ts (308 aa).

Positions threonine 80–valine 83 are involved in Mg(2+) ion dislocation from EF-Tu.

This sequence belongs to the EF-Ts family.

It is found in the cytoplasm. Functionally, associates with the EF-Tu.GDP complex and induces the exchange of GDP to GTP. It remains bound to the aminoacyl-tRNA.EF-Tu.GTP complex up to the GTP hydrolysis stage on the ribosome. In Rhodopseudomonas palustris (strain BisB5), this protein is Elongation factor Ts.